The chain runs to 361 residues: Phospho-N-acetylmuramoyl-pentapeptide-transferase (361 aa).

The next 10 membrane-spanning stretches (helical) occupy residues 28–48 (LAAL…IRSL), 73–93 (TMGG…WADL), 97–117 (YIWV…VDDY), 134–154 (FFWQ…TADL), 168–188 (VAIP…IVGT), 200–220 (GLAI…AYVA), 237–257 (AGEL…FLWF), 264–284 (VFMG…ITVI), 289–309 (IVLV…MIQV), and 338–358 (QVVV…LSTL).

It belongs to the glycosyltransferase 4 family. MraY subfamily. Requires Mg(2+) as cofactor.

The protein localises to the cell inner membrane. The catalysed reaction is UDP-N-acetyl-alpha-D-muramoyl-L-alanyl-gamma-D-glutamyl-meso-2,6-diaminopimeloyl-D-alanyl-D-alanine + di-trans,octa-cis-undecaprenyl phosphate = di-trans,octa-cis-undecaprenyl diphospho-N-acetyl-alpha-D-muramoyl-L-alanyl-D-glutamyl-meso-2,6-diaminopimeloyl-D-alanyl-D-alanine + UMP. Its pathway is cell wall biogenesis; peptidoglycan biosynthesis. Functionally, catalyzes the initial step of the lipid cycle reactions in the biosynthesis of the cell wall peptidoglycan: transfers peptidoglycan precursor phospho-MurNAc-pentapeptide from UDP-MurNAc-pentapeptide onto the lipid carrier undecaprenyl phosphate, yielding undecaprenyl-pyrophosphoryl-MurNAc-pentapeptide, known as lipid I. This is Phospho-N-acetylmuramoyl-pentapeptide-transferase from Nitrosomonas europaea (strain ATCC 19718 / CIP 103999 / KCTC 2705 / NBRC 14298).